The sequence spans 447 residues: Glucose-6-phosphate isomerase (447 aa).

The active-site Proton donor is E288. Catalysis depends on residues H309 and K423.

This sequence belongs to the GPI family.

It is found in the cytoplasm. The catalysed reaction is alpha-D-glucose 6-phosphate = beta-D-fructose 6-phosphate. It functions in the pathway carbohydrate biosynthesis; gluconeogenesis. It participates in carbohydrate degradation; glycolysis; D-glyceraldehyde 3-phosphate and glycerone phosphate from D-glucose: step 2/4. Catalyzes the reversible isomerization of glucose-6-phosphate to fructose-6-phosphate. This chain is Glucose-6-phosphate isomerase, found in Lactobacillus johnsonii (strain CNCM I-12250 / La1 / NCC 533).